A 127-amino-acid chain; its full sequence is Calcitonin gene-related peptide 2 (127 aa).

An N-terminal signal peptide occupies residues 1–25 (MGFRKFSPFLALSILVLYQAGSLQA). Positions 26–79 (APFRSALESSPDPATLSKEDARLLLAALVQDYVQMKASELKQEQETQGSSSAAQ) are excised as a propeptide. A disulfide bridge links cysteine 83 with cysteine 88. A Phenylalanine amide modification is found at phenylalanine 118. A propeptide spanning residues 124-127 (DLQA) is cleaved from the precursor.

The protein belongs to the calcitonin family. Expressed in spinal cord, pituitary and thalamus.

Its subcellular location is the secreted. In terms of biological role, CALCB/CGRP2 is a peptide hormone that induces vasodilation mediated by the CALCRL-RAMP1 receptor complex. Dilates a variety of vessels including the coronary, cerebral and systemic vasculature. Its abundance in the CNS also points toward a neurotransmitter or neuromodulator role. This chain is Calcitonin gene-related peptide 2, found in Homo sapiens (Human).